Reading from the N-terminus, the 358-residue chain is 5,10-methenyltetrahydromethanopterin hydrogenase (358 aa).

The protein belongs to the HMD family. In terms of assembly, homotetramer.

The catalysed reaction is 5,10-methenyl-5,6,7,8-tetrahydromethanopterin + H2 = 5,10-methylenetetrahydromethanopterin + H(+). It functions in the pathway one-carbon metabolism; methanogenesis from CO(2); 5,10-methylene-5,6,7,8-tetrahydromethanopterin from 5,10-methenyl-5,6,7,8-tetrahydromethanopterin (hydrogen route): step 1/1. Its activity is regulated as follows. Activity requires salt; 100 mM potassium phosphate, potassium chloride, and sodium chloride are equally effective. Catalyzes the reversible reduction of methenyl-H(4)MPT(+) to methylene-H(4)MPT. The polypeptide is 5,10-methenyltetrahydromethanopterin hydrogenase (Methanopyrus kandleri (strain AV19 / DSM 6324 / JCM 9639 / NBRC 100938)).